The primary structure comprises 41 residues: Ornatin-A3 (41 aa).

Positions Arg-33–Asp-35 match the Cell attachment site motif.

It belongs to the ornatin family.

The protein localises to the secreted. In terms of biological role, potent inhibitor of fibrinogen interaction with platelet receptors expressed on glycoprotein IIb-IIIa complex. May prevent blood from clotting during either feeding and/or storage of ingested blood. This is Ornatin-A3 from Placobdella ornata (Turtle leech).